The sequence spans 587 residues: Polyphenol oxidase E, chloroplastic (587 aa).

The transit peptide at 1 to 87 (MSSSSSITTT…AANLAPLATA (87 aa)) directs the protein to the chloroplast. Intrachain disulfides connect cysteine 98/cysteine 114 and cysteine 113/cysteine 180. Residues histidine 179, histidine 197, histidine 206, histidine 328, histidine 332, and histidine 363 each coordinate Cu cation. A cross-link (2'-(S-cysteinyl)-histidine (Cys-His)) is located at residues 183–197 (CNGAYKVGGKELQVH).

Belongs to the tyrosinase family. The cofactor is Cu(2+).

It localises to the plastid. Its subcellular location is the chloroplast thylakoid lumen. The catalysed reaction is 2 catechol + O2 = 2 1,2-benzoquinone + 2 H2O. Catalyzes the oxidation of mono- and o-diphenols to o-diquinones. The polypeptide is Polyphenol oxidase E, chloroplastic (Solanum lycopersicum (Tomato)).